The sequence spans 598 residues: Dihydroxy-acid dehydratase astD, mitochondrial (598 aa).

A mitochondrion-targeting transit peptide spans 1–111 (MFASRIRSRA…HRAGLVPMRF (111 aa)). The tract at residues 23–50 (RLPASTTGRRYKSDETLNRVSSKITQPK) is disordered. Residues 40 to 50 (NRVSSKITQPK) are compositionally biased toward polar residues. A [2Fe-2S] cluster-binding site is contributed by Cys86. Asp118 contributes to the Mg(2+) binding site. [2Fe-2S] cluster is bound at residue Cys159. Asp160 contacts Mg(2+). A [2Fe-2S] cluster-binding site is contributed by Cys232. Glu485 is a binding site for Mg(2+). The active-site Proton acceptor is Ser511.

Belongs to the IlvD/Edd family. [2Fe-2S] cluster serves as cofactor. It depends on Mg(2+) as a cofactor.

The protein resides in the mitochondrion. The enzyme catalyses (2R)-2,3-dihydroxy-3-methylbutanoate = 3-methyl-2-oxobutanoate + H2O. It catalyses the reaction (2R,3R)-2,3-dihydroxy-3-methylpentanoate = (S)-3-methyl-2-oxopentanoate + H2O. It functions in the pathway amino-acid biosynthesis; L-isoleucine biosynthesis; L-isoleucine from 2-oxobutanoate: step 3/4. The protein operates within amino-acid biosynthesis; L-valine biosynthesis; L-valine from pyruvate: step 3/4. DHAD activity is not inhibited by the dihydroxyacid dehydratase inhibitor aspterric acid (AA). Its function is as follows. Dihydroxyacid dehydratase; part of the gene cluster that mediates the biosynthesis of the sesquiterpenoid aspterric acid (AA), an inhibitor of dihydroxy-acid dehydratase (DHAD) effective as an herbicide. Performs the third step in the common pathway leading to biosynthesis of branched-chain amino acids. Catalyzes the dehydration of (2R,3R)-2,3-dihydroxy-3-methylpentanoate (2,3-dihydroxy-3-methylvalerate) into 2-oxo-3-methylpentanoate (2-oxo-3-methylvalerate) and of (2R)-2,3-dihydroxy-3-methylbutanoate (2,3-dihydroxyisovalerate) into 2-oxo-3-methylbutanoate (2-oxoisovalerate), the penultimate precursor to L-isoleucine and L-valine, respectively. AstD confers self-resistance in the presence of the dihydroxyacid dehydratase inhibitor aspterric acid (AA) produced by the ast cluster. The chain is Dihydroxy-acid dehydratase astD, mitochondrial from Aspergillus terreus (strain NIH 2624 / FGSC A1156).